Here is a 274-residue protein sequence, read N- to C-terminus: 2,3,4,5-tetrahydropyridine-2,6-dicarboxylate N-succinyltransferase (274 aa).

Arg104 and Asp141 together coordinate substrate.

Belongs to the transferase hexapeptide repeat family. In terms of assembly, homotrimer.

The protein localises to the cytoplasm. The catalysed reaction is (S)-2,3,4,5-tetrahydrodipicolinate + succinyl-CoA + H2O = (S)-2-succinylamino-6-oxoheptanedioate + CoA. Its pathway is amino-acid biosynthesis; L-lysine biosynthesis via DAP pathway; LL-2,6-diaminopimelate from (S)-tetrahydrodipicolinate (succinylase route): step 1/3. This chain is 2,3,4,5-tetrahydropyridine-2,6-dicarboxylate N-succinyltransferase, found in Yersinia enterocolitica serotype O:8 / biotype 1B (strain NCTC 13174 / 8081).